The sequence spans 130 residues: S-adenosylmethionine decarboxylase proenzyme (130 aa).

S78 functions as the Schiff-base intermediate with substrate; via pyruvic acid in the catalytic mechanism. S78 carries the pyruvic acid (Ser); by autocatalysis modification. H83 (proton acceptor; for processing activity) is an active-site residue. C98 (proton donor; for catalytic activity) is an active-site residue.

It belongs to the prokaryotic AdoMetDC family. Type 1 subfamily. As to quaternary structure, heterotetramer of two alpha and two beta chains arranged as a dimer of alpha/beta heterodimers. Pyruvate serves as cofactor. Is synthesized initially as an inactive proenzyme. Formation of the active enzyme involves a self-maturation process in which the active site pyruvoyl group is generated from an internal serine residue via an autocatalytic post-translational modification. Two non-identical subunits are generated from the proenzyme in this reaction, and the pyruvate is formed at the N-terminus of the alpha chain, which is derived from the carboxyl end of the proenzyme. The post-translation cleavage follows an unusual pathway, termed non-hydrolytic serinolysis, in which the side chain hydroxyl group of the serine supplies its oxygen atom to form the C-terminus of the beta chain, while the remainder of the serine residue undergoes an oxidative deamination to produce ammonia and the pyruvoyl group blocking the N-terminus of the alpha chain.

It catalyses the reaction S-adenosyl-L-methionine + H(+) = S-adenosyl 3-(methylsulfanyl)propylamine + CO2. It participates in amine and polyamine biosynthesis; S-adenosylmethioninamine biosynthesis; S-adenosylmethioninamine from S-adenosyl-L-methionine: step 1/1. Its function is as follows. Catalyzes the decarboxylation of S-adenosylmethionine to S-adenosylmethioninamine (dcAdoMet), the propylamine donor required for the synthesis of the polyamines spermine and spermidine from the diamine putrescine. The polypeptide is S-adenosylmethionine decarboxylase proenzyme (Aeropyrum pernix (strain ATCC 700893 / DSM 11879 / JCM 9820 / NBRC 100138 / K1)).